Reading from the N-terminus, the 318-residue chain is COP9 signalosome complex subunit 6 (318 aa).

An MPN domain is found at 32-165; it reads VALHPLVILN…VSVYESVIDI (134 aa).

This sequence belongs to the peptidase M67A family. CSN6 subfamily. In terms of assembly, component of the CSN complex, probably composed of cops1, cops2, cops3, cops4, cops5, cops6, cops7, cops8 and cops9.

It is found in the cytoplasm. The protein localises to the nucleus. Its function is as follows. Component of the COP9 signalosome complex (CSN), a complex involved in various cellular and developmental processes. The CSN complex is an essential regulator of the ubiquitin (Ubl) conjugation pathway by mediating the deneddylation of the cullin subunits of E3 ligase complexes, leading to modify the Ubl ligase activity. This is COP9 signalosome complex subunit 6 (cops6) from Xenopus laevis (African clawed frog).